Here is a 500-residue protein sequence, read N- to C-terminus: Glycerol kinase (500 aa).

Residue Thr11 coordinates ADP. The ATP site is built by Thr11, Thr12, and Ser13. Thr11 lines the sn-glycerol 3-phosphate pocket. Arg15 is an ADP binding site. 4 residues coordinate sn-glycerol 3-phosphate: Arg81, Glu82, Tyr133, and Asp242. 5 residues coordinate glycerol: Arg81, Glu82, Tyr133, Asp242, and Gln243. Residues Thr264 and Gly307 each contribute to the ADP site. Positions 264, 307, 311, and 411 each coordinate ATP. Gly411 contacts ADP.

Belongs to the FGGY kinase family.

It carries out the reaction glycerol + ATP = sn-glycerol 3-phosphate + ADP + H(+). The protein operates within polyol metabolism; glycerol degradation via glycerol kinase pathway; sn-glycerol 3-phosphate from glycerol: step 1/1. Its activity is regulated as follows. Inhibited by fructose 1,6-bisphosphate (FBP). Its function is as follows. Key enzyme in the regulation of glycerol uptake and metabolism. Catalyzes the phosphorylation of glycerol to yield sn-glycerol 3-phosphate. This is Glycerol kinase from Bradyrhizobium diazoefficiens (strain JCM 10833 / BCRC 13528 / IAM 13628 / NBRC 14792 / USDA 110).